A 482-amino-acid polypeptide reads, in one-letter code: Protein trichome birefringence-like 15 (482 aa).

The chain crosses the membrane as a helical; Signal-anchor for type II membrane protein span at residues 109–129 (GSVSLSLIILILLVTTLLVSA). The short motif at 217–219 (GDS) is the GDS motif element. The DCXHWCLPGXXDXWN motif signature appears at 461 to 475 (DCLHWCLPGIPDTWN).

The protein belongs to the PC-esterase family. TBL subfamily.

It localises to the membrane. Its function is as follows. May act as a bridging protein that binds pectin and other cell wall polysaccharides. Probably involved in maintaining esterification of pectins. May be involved in the specific O-acetylation of cell wall polymers. The polypeptide is Protein trichome birefringence-like 15 (TBL15) (Arabidopsis thaliana (Mouse-ear cress)).